The following is a 262-amino-acid chain: Cerebellar degeneration-related antigen 1 (262 aa).

34 tandem repeats follow at residues 3–8, 9–14, 15–20, 21–26, 27–32, 33–38, 39–44, 45–50, 51–56, 57–62, 63–68, 69–74, 75–80, 81–86, 87–92, 93–98, 99–104, 105–110, 111–116, 117–122, 123–128, 129–134, 135–140, 141–146, 147–152, 153–158, 159–164, 165–170, 171–176, 177–182, 183–188, 189–194, 195–200, and 201–206. The 23 X 6 AA approximate repeats stretch occupies residues 3–140; that stretch reads WLEDVDFLED…EDLEAIGRCG (138 aa). Residues 141-176 are 6 X 6 AA approximate repeats; it reads FSGRHGFFGRRRFSGRPKLSGRLGLLGRRGFSGRLG. The interval 177–206 is 5 X 6 AA approximate repeats; the sequence is GYWKTWIFWKTWIFWKTWIFRKTYIGWKTW.

As to expression, brain; predominantly expressed in normal neuroectodermal tissues and in certain malignant tumors.

This chain is Cerebellar degeneration-related antigen 1 (CDR1), found in Homo sapiens (Human).